The sequence spans 83 residues: Protein Vpr (83 aa).

S79 carries the post-translational modification Phosphoserine; by host.

Interacts with human UNG.

It localises to the virion. The protein localises to the host nucleus. Its function is as follows. Stimulates gene expression driven by the HIV-2 LTR. Prevents infected cells from undergoing mitosis and proliferating, by inducing arrest or delay in the G2 phase of the cell cycle. Cell cycle arrest creates a favorable environment for maximizing viral expression and production. The chain is Protein Vpr from Pan troglodytes (Chimpanzee).